A 375-amino-acid polypeptide reads, in one-letter code: Alanine racemase (375 aa).

The Proton acceptor; specific for D-alanine role is filled by K38. N6-(pyridoxal phosphate)lysine is present on K38. Position 137 (R137) interacts with substrate. Catalysis depends on Y266, which acts as the Proton acceptor; specific for L-alanine. Residue M314 coordinates substrate.

It belongs to the alanine racemase family. It depends on pyridoxal 5'-phosphate as a cofactor.

The catalysed reaction is L-alanine = D-alanine. It functions in the pathway amino-acid biosynthesis; D-alanine biosynthesis; D-alanine from L-alanine: step 1/1. Catalyzes the interconversion of L-alanine and D-alanine. May also act on other amino acids. In Cutibacterium acnes (strain DSM 16379 / KPA171202) (Propionibacterium acnes), this protein is Alanine racemase (alr).